A 298-amino-acid polypeptide reads, in one-letter code: Junctional adhesion molecule A (298 aa).

The first 28 residues, Met-1–Gly-28, serve as a signal peptide directing secretion. 2 consecutive Ig-like V-type domains span residues Ala-29–Thr-126 and Pro-134–Arg-227. Topologically, residues Ala-29–Gly-237 are extracellular. Disulfide bonds link Cys-49-Cys-108 and Cys-152-Cys-211. Residue Asn-184 is glycosylated (N-linked (GlcNAc...) asparagine). Residues Ile-238–Phe-258 traverse the membrane as a helical segment. At Ala-259–Val-298 the chain is on the cytoplasmic side. Phosphoserine is present on residues Ser-280 and Ser-286.

Belongs to the immunoglobulin superfamily. In terms of assembly, interacts with the ninth PDZ domain of MPDZ. Interacts with the first PDZ domain of PARD3. The association between PARD3 and PARD6B probably disrupts this interaction. Interacts with ITGAL (via I-domain). Interacts with CD151. As to quaternary structure, (Microbial infection) Interacts with calicivirus capsid protein. (Microbial infection) Interacts with the orthoreovirus sigma-1 capsid protein.

It localises to the cell junction. The protein resides in the tight junction. The protein localises to the cell membrane. Seems to play a role in epithelial tight junction formation. Appears early in primordial forms of cell junctions and recruits PARD3. The association of the PARD6-PARD3 complex may prevent the interaction of PARD3 with JAM1, thereby preventing tight junction assembly. Plays a role in regulating monocyte transmigration involved in integrity of epithelial barrier. Ligand for integrin alpha-L/beta-2 involved in memory T-cell and neutrophil transmigration. Involved in platelet activation. In terms of biological role, (Microbial infection) Acts as a functional receptor for murine norovirus. Its function is as follows. (Microbial infection) In case of orthoreovirus infection, serves as receptor for the virus. This Felis catus (Cat) protein is Junctional adhesion molecule A (F11R).